A 370-amino-acid polypeptide reads, in one-letter code: Peptidyl-prolyl cis-trans isomerase D (370 aa).

At serine 5 the chain carries Phosphoserine. The 165-residue stretch at phenylalanine 19–glutamate 183 folds into the PPIase cyclophilin-type domain. The residue at position 171 (lysine 171) is an N6-acetyllysine. Positions lysine 185–aspartate 215 are chaperone activity. Serine 198 carries the phosphoserine modification. The interaction with HSP90AB1 stretch occupies residues lysine 214 to alanine 370. TPR repeat units follow at residues serine 223–serine 256, leucine 273–asparagine 306, and threonine 307–aspartate 340.

It belongs to the cyclophilin-type PPIase family. PPIase D subfamily. In terms of assembly, identified in ESR1 or NR3C1/GCR steroid receptor-chaperone complexes. Found in HSP90 chaperone complexes with kinase clients LCK or EIF2AK1. Two monomers associate with one HSP90 homodimer. Interacts with HSP90AA1. Interacts with HSP90AB1; PPID and FKBP4 compete for binding to HSP90AB1 and the interaction is mutually exclusive with the PPID:HSPA8 interaction. Interacts with HSPA8; PPID and STIP1 but not FKBP4 compete for binding to HSPA8 and the interaction is mutually exclusive with the PPID:HSP90AB1 interaction. Interacts with S100A1 and S100A2; the interactions dissociate the PPID:HSP90AA1 interaction. Interacts with S100A6. Interacts with MYB, ILF2, XRCC6, RACK1 and RPS3. Interacts with cytoplasmic dynein 1 intermediate chain (DYNC1I1 or DYNC1I2). In terms of processing, the N-terminus is blocked. As to expression, detected in heart, thymis and brain.

It localises to the cytoplasm. It is found in the nucleus. Its subcellular location is the nucleolus. The protein localises to the nucleoplasm. It carries out the reaction [protein]-peptidylproline (omega=180) = [protein]-peptidylproline (omega=0). With respect to regulation, less sensitive to inhibition by cyclosporin A than is CYP-18. Functionally, PPIase that catalyzes the cis-trans isomerization of proline imidic peptide bonds in oligopeptides and may therefore assist protein folding. Proposed to act as a co-chaperone in HSP90 complexes such as in unligated steroid receptors heterocomplexes. Different co-chaperones seem to compete for association with HSP90 thus establishing distinct HSP90-co-chaperone-receptor complexes with the potential to exert tissue-specific receptor activity control. May have a preference for estrogen receptor complexes and is not found in glucocorticoid receptor complexes. May be involved in cytoplasmic dynein-dependent movement of the receptor from the cytoplasm to the nucleus. May regulate MYB by inhibiting its DNA-binding activity. Involved in regulation of AHR signaling by promoting the formation of the AHR:ARNT dimer; the function is independent of HSP90 but requires the chaperone activity. Involved in regulation of UV radiation-induced apoptosis. The sequence is that of Peptidyl-prolyl cis-trans isomerase D from Bos taurus (Bovine).